Reading from the N-terminus, the 418-residue chain is MSGATLLKESGPREVFCGLTSIVWLHRRMPDAFFLVVGSRTCAHLIQSAAGVMIFAEPRFGTAILEERDLAGLADAHDELNRVVKNLLARRPEIKTLFLVGSCPSEVIKIDLSRVAENLNIELKGQVTVLNYSGSGIETTFTQGEDGALKALIPLMPKSDQKKLLLVGTLANAVEDRLTSIFNRLGIDKVESFPPRQSTELPSIGPETKVLLTQPYLTDTARELKNKGAEIIEAPFPLGVTGSTLWIQAAADSFGIEKSLVDSILNPLISRAKQALIPHVEKLSGKKLFLLPESQLEIPLARFLSNECGMEIIEIGTPYLNRDLMKAEIDLLPPDCRIVEGQHVERQLDRVRDSSPDLVVCGMGLANPLEAEGISTKWSIEMVFSPIHGIDQASDLAELFSRPLRRHDILNPKTLTSN.

Residues cysteine 17, cysteine 42, and cysteine 103 each coordinate [4Fe-4S] cluster.

This sequence belongs to the BchN/ChlN family. As to quaternary structure, protochlorophyllide reductase is composed of three subunits; ChlL, ChlN and ChlB. Forms a heterotetramer of two ChlB and two ChlN subunits. The cofactor is [4Fe-4S] cluster.

The catalysed reaction is chlorophyllide a + oxidized 2[4Fe-4S]-[ferredoxin] + 2 ADP + 2 phosphate = protochlorophyllide a + reduced 2[4Fe-4S]-[ferredoxin] + 2 ATP + 2 H2O. Its pathway is porphyrin-containing compound metabolism; chlorophyll biosynthesis (light-independent). Functionally, component of the dark-operative protochlorophyllide reductase (DPOR) that uses Mg-ATP and reduced ferredoxin to reduce ring D of protochlorophyllide (Pchlide) to form chlorophyllide a (Chlide). This reaction is light-independent. The NB-protein (ChlN-ChlB) is the catalytic component of the complex. In Prochlorococcus marinus (strain NATL2A), this protein is Light-independent protochlorophyllide reductase subunit N.